Here is a 548-residue protein sequence, read N- to C-terminus: Chaperonin GroEL (548 aa).

Residues 30–33 (TLGP), Lys51, 87–91 (DGTTT), Gly415, 479–481 (NAA), and Asp495 each bind ATP.

This sequence belongs to the chaperonin (HSP60) family. As to quaternary structure, forms a cylinder of 14 subunits composed of two heptameric rings stacked back-to-back. Interacts with the co-chaperonin GroES.

Its subcellular location is the cytoplasm. It carries out the reaction ATP + H2O + a folded polypeptide = ADP + phosphate + an unfolded polypeptide.. Functionally, together with its co-chaperonin GroES, plays an essential role in assisting protein folding. The GroEL-GroES system forms a nano-cage that allows encapsulation of the non-native substrate proteins and provides a physical environment optimized to promote and accelerate protein folding. The polypeptide is Chaperonin GroEL (Proteus mirabilis (strain HI4320)).